Reading from the N-terminus, the 457-residue chain is Forkhead box protein N3 (457 aa).

A disordered region spans residues 1-24 (MGPVMPASKKAESSGISVSSGLSQ). Low complexity predominate over residues 13 to 23 (SSGISVSSGLS). 3 positions are modified to phosphoserine: serine 83, serine 85, and serine 97. Residues 86-109 (PVQDLDDDTPPSPAHSDMPYDARQ) are disordered. Residues 114–210 (KPPYSFSCLI…QALKKTPYHP (97 aa)) constitute a DNA-binding region (fork-head). Residues 285 to 422 (RTESEPPCGS…PESDDEEMKE (138 aa)) form a disordered region. 2 stretches are compositionally biased toward low complexity: residues 308–331 (SSAK…SSSS) and 342–353 (GSQEGSEGSFQS). A compositionally biased stretch (basic and acidic residues) spans 354 to 376 (HESHSEPEEEDRKPSPKEGKDAL). The span at 384–396 (QHKKRQHFAKARK) shows a compositional bias: basic residues. Serine 415 bears the Phosphoserine mark.

As to quaternary structure, interacts through its C-terminus with the C-terminus of SNW1/SKIP.

The protein resides in the nucleus. Its function is as follows. Acts as a transcriptional repressor. May be involved in DNA damage-inducible cell cycle arrests (checkpoints). The sequence is that of Forkhead box protein N3 (Foxn3) from Mus musculus (Mouse).